The sequence spans 356 residues: DNA polymerase IV (356 aa).

Residues 7–187 form the UmuC domain; it reads IIHVDMDAFY…LPVNRVPGVG (181 aa). Residues Asp-11 and Asp-105 each coordinate Mg(2+). The active site involves Glu-106.

This sequence belongs to the DNA polymerase type-Y family. In terms of assembly, monomer. Requires Mg(2+) as cofactor.

It localises to the cytoplasm. It catalyses the reaction DNA(n) + a 2'-deoxyribonucleoside 5'-triphosphate = DNA(n+1) + diphosphate. Functionally, poorly processive, error-prone DNA polymerase involved in untargeted mutagenesis. Copies undamaged DNA at stalled replication forks, which arise in vivo from mismatched or misaligned primer ends. These misaligned primers can be extended by PolIV. Exhibits no 3'-5' exonuclease (proofreading) activity. May be involved in translesional synthesis, in conjunction with the beta clamp from PolIII. The protein is DNA polymerase IV of Stenotrophomonas maltophilia (strain R551-3).